The following is a 324-amino-acid chain: Heat-inducible transcription repressor HrcA (324 aa).

This sequence belongs to the HrcA family.

In terms of biological role, negative regulator of class I heat shock genes (grpE-dnaK-dnaJ and groELS operons). Prevents heat-shock induction of these operons. The chain is Heat-inducible transcription repressor HrcA from Synechococcus sp. (strain CC9902).